The primary structure comprises 660 residues: Glycogen debranching enzyme (660 aa).

Asp338 acts as the Nucleophile in catalysis. The active-site Proton donor is the Glu373. Over residues 460–472 the composition is skewed to basic and acidic residues; it reads NEANGEDNRDGAW. The segment at 460–482 is disordered; it reads NEANGEDNRDGAWENHSNNHGYE.

This sequence belongs to the glycosyl hydrolase 13 family.

The catalysed reaction is Hydrolysis of (1-&gt;6)-alpha-D-glucosidic linkages to branches with degrees of polymerization of three or four glucose residues in limit dextrin.. It participates in glycan degradation; glycogen degradation. Its function is as follows. Removes maltotriose and maltotetraose chains that are attached by 1,6-alpha-linkage to the limit dextrin main chain, generating a debranched limit dextrin. This Cronobacter sakazakii (strain ATCC BAA-894) (Enterobacter sakazakii) protein is Glycogen debranching enzyme.